The chain runs to 153 residues: Pheromone-binding protein Gp-9 (153 aa).

A signal peptide spans 1–19 (MKTFVLHIFIFALVAFASA). Intrachain disulfides connect Cys-37–Cys-77, Cys-73–Cys-129, and Cys-118–Cys-138.

Belongs to the PBP/GOBP family. Homodimer.

It localises to the secreted. In terms of biological role, colony queen number, a major feature of social organization, is associated with worker genotype for Gp-9. Colonies are headed by either a single reproductive queen (monogyne form) or multiple queens (polygyne form). Differences in worker Gp-9 genotypes between social forms may cause differences in workers' abilities to recognize queens and regulate their numbers. The chain is Pheromone-binding protein Gp-9 from Solenopsis invicta (Red imported fire ant).